We begin with the raw amino-acid sequence, 147 residues long: Proteinase inhibitor type-2 (147 aa).

The first 25 residues, 1–25 (MAVHKEVSFVAYLLIVLGMFLYVDA), serve as a signal peptide directing secretion. 2 repeat units span residues 25–81 (ALGC…DPKN) and 82–141 (PKAC…DEPK). 8 cysteine pairs are disulfide-bonded: Cys28-Cys116, Cys32-Cys112, Cys40-Cys122, Cys52-Cys89, Cys55-Cys73, Cys56-Cys85, Cys62-Cys98, and Cys115-Cys133.

The protein belongs to the protease inhibitor I20 (potato type II proteinase inhibitor) family.

This is Proteinase inhibitor type-2 from Solanum tuberosum (Potato).